We begin with the raw amino-acid sequence, 320 residues long: Putative HTH-type transcriptional regulatory protein VNG_2112C (320 aa).

Positions 132-189 (LADRREDERLSLGQLASELGVSRRTVSKYEDGMNASIEVAMRLEDLFGGELTAPVDVM) constitute an HTH cro/C1-type domain. The segment at residues 143 to 162 (LGQLASELGVSRRTVSKYED) is a DNA-binding region (H-T-H motif).

The sequence is that of Putative HTH-type transcriptional regulatory protein VNG_2112C from Halobacterium salinarum (strain ATCC 700922 / JCM 11081 / NRC-1) (Halobacterium halobium).